Reading from the N-terminus, the 765-residue chain is LPS-assembly protein LptD (765 aa).

Positions 1–18 (MQIRYLLALSLLPKLVLA) are cleaved as a signal peptide.

The protein belongs to the LptD family. Component of the lipopolysaccharide transport and assembly complex. Interacts with LptE and LptA.

It is found in the cell outer membrane. In terms of biological role, together with LptE, is involved in the assembly of lipopolysaccharide (LPS) at the surface of the outer membrane. The chain is LPS-assembly protein LptD from Shewanella oneidensis (strain ATCC 700550 / JCM 31522 / CIP 106686 / LMG 19005 / NCIMB 14063 / MR-1).